The primary structure comprises 145 residues: RxLR effector protein BLR40 (145 aa).

Residues 1–22 form the signal peptide; it reads MLLSRAISVVALLACICCGVHT. A RxLR-dEER motif is present at residues 44-58; sequence RRLRTSVDLVDNEER.

The protein belongs to the RxLR effector family.

It is found in the secreted. Its subcellular location is the host cell membrane. Its function is as follows. Secreted effector that triggers a robust hypersensitive response (HR) in Lactuca sativa cv. Design that is resistant to multiple B.lactucae races, including Bl:24. This Bremia lactucae (Lettuce downy mildew) protein is RxLR effector protein BLR40.